Here is a 310-residue protein sequence, read N- to C-terminus: tRNA dimethylallyltransferase 2 (310 aa).

15-22 lines the ATP pocket; sequence GPTASGKT. 17–22 contacts substrate; that stretch reads TASGKT. Residues 40-43 are interaction with substrate tRNA; that stretch reads DSMQ.

The protein belongs to the IPP transferase family. In terms of assembly, monomer. Mg(2+) is required as a cofactor.

It catalyses the reaction adenosine(37) in tRNA + dimethylallyl diphosphate = N(6)-dimethylallyladenosine(37) in tRNA + diphosphate. Functionally, catalyzes the transfer of a dimethylallyl group onto the adenine at position 37 in tRNAs that read codons beginning with uridine, leading to the formation of N6-(dimethylallyl)adenosine (i(6)A). The polypeptide is tRNA dimethylallyltransferase 2 (Geotalea uraniireducens (strain Rf4) (Geobacter uraniireducens)).